A 2822-amino-acid chain; its full sequence is Piezo-type mechanosensitive ion channel component 2 (2822 aa).

At M1–R12 the chain is on the cytoplasmic side. The helical transmembrane segment at L13–A24 threads the bilayer. Over F25–L30 the chain is Extracellular. Residues S31–L43 form a helical membrane-spanning segment. Topologically, residues F44 to A50 are cytoplasmic. The helical transmembrane segment at T51–I76 threads the bilayer. Residues F77–V122 lie on the Extracellular side of the membrane. Residue N95 is glycosylated (N-linked (GlcNAc...) asparagine). Residues F123 to R141 form a helical membrane-spanning segment. The Cytoplasmic portion of the chain corresponds to T142–T221. The helical transmembrane segment at A222–M237 threads the bilayer. Residues L238–S240 are Extracellular-facing. Residues L241–S258 traverse the membrane as a helical segment. Residues W259–D264 are Cytoplasmic-facing. A helical transmembrane segment spans residues P265–Y287. The Extracellular segment spans residues L288–H335. A helical membrane pass occupies residues A336 to W355. At L356–V492 the chain is on the cytoplasmic side. The tract at residues Y450–K481 is disordered. A coiled-coil region spans residues S455–R482. The segment covering E463 to S477 has biased composition (acidic residues). Residues F493–T514 form a helical membrane-spanning segment. The Extracellular segment spans residues Y515–L519. A helical transmembrane segment spans residues T520–W531. Topologically, residues M532–N535 are cytoplasmic. Residues R536–S562 traverse the membrane as a helical segment. At F563 to L583 the chain is on the extracellular side. A helical transmembrane segment spans residues A584–L614. Over S615–K689 the chain is Cytoplasmic. Composition is skewed to acidic residues over residues L624 to Q633 and E643 to I652. Residues L624–E668 form a disordered region. Basic and acidic residues predominate over residues K653–E662. A helical membrane pass occupies residues Y690–S703. Topologically, residues F704 to V709 are extracellular. Residues M710 to V728 form a helical membrane-spanning segment. Residues H729–L737 lie on the Cytoplasmic side of the membrane. A helical transmembrane segment spans residues K738–T757. Over Y758–A789 the chain is Extracellular. A helical membrane pass occupies residues E790–Y811. Topologically, residues F812 to L957 are cytoplasmic. At S856 the chain carries Phosphoserine. Residues Q875–S901 show a composition bias toward basic and acidic residues. A disordered region spans residues Q875 to S919. Acidic residues predominate over residues D902 to S919. A helical transmembrane segment spans residues H958–K973. Over E974–N979 the chain is Extracellular. Residues Y980–A989 traverse the membrane as a helical segment. The Cytoplasmic portion of the chain corresponds to L990–R997. A helical transmembrane segment spans residues A998–Q1018. At L1019–L1074 the chain is on the extracellular side. N1030 carries N-linked (GlcNAc...) asparagine glycosylation. Residues C1031 and C1209 are joined by a disulfide bond. A helical transmembrane segment spans residues R1075–G1099. The Cytoplasmic segment spans residues R1100–G1140. The helical transmembrane segment at L1141–R1155 threads the bilayer. Residues M1156 to D1157 lie on the Extracellular side of the membrane. A helical membrane pass occupies residues F1158 to L1171. The Cytoplasmic segment spans residues Y1172 to V1182. The chain crosses the membrane as a helical span at residues W1183 to I1202. The Extracellular segment spans residues G1203 to N1239. Residues P1240 to F1260 traverse the membrane as a helical segment. Residues E1261–L1314 are Cytoplasmic-facing. A helical transmembrane segment spans residues F1315–T1327. Topologically, residues T1328–F1333 are extracellular. Residues C1334 to L1346 traverse the membrane as a helical segment. At F1347–P1355 the chain is on the cytoplasmic side. Residues I1356–S1381 traverse the membrane as a helical segment. Residues I1382–I1430 lie on the Extracellular side of the membrane. The helical transmembrane segment at W1431 to M1447 threads the bilayer. The Cytoplasmic segment spans residues S1448–R1991. Residues T1475–M1515 adopt a coiled-coil conformation. 2 disordered regions span residues Q1505–Q1551 and L1611–D1653. Basic residues predominate over residues L1611 to L1621. Positions A1622–S1633 are enriched in basic and acidic residues. The chain crosses the membrane as a helical span at residues S1992–T2006. Topologically, residues S2007–L2013 are extracellular. A helical membrane pass occupies residues L2014–L2025. The Cytoplasmic portion of the chain corresponds to S2026–S2031. A helical membrane pass occupies residues R2032 to Q2053. Over F2054–V2086 the chain is Extracellular. A helical transmembrane segment spans residues L2087–C2105. The Cytoplasmic portion of the chain corresponds to H2106 to V2259. 2 disordered regions span residues D2120–D2139 and I2164–S2205. Over residues C2170–S2197 the composition is skewed to low complexity. Residues Y2260–W2279 traverse the membrane as a helical segment. Over A2280 to G2301 the chain is Extracellular. A helical transmembrane segment spans residues P2302–L2322. At R2323–V2326 the chain is on the cytoplasmic side. A helical transmembrane segment spans residues L2327–G2350. Residues V2351–N2359 are Extracellular-facing. The helical transmembrane segment at L2360–C2382 threads the bilayer. Topologically, residues G2383–K2467 are cytoplasmic. A helical transmembrane segment spans residues K2468–L2491. Residues F2492–G2739 lie on the Extracellular side of the membrane. N-linked (GlcNAc...) asparagine glycosylation is present at N2692. The chain crosses the membrane as a helical span at residues I2740–S2760. Topologically, residues G2761 to N2822 are cytoplasmic.

This sequence belongs to the PIEZO (TC 1.A.75) family. As to quaternary structure, homotrimer; the homotrimer forms a propeller-shaped Piezo channel with a cation-ion conducting pore. Heterotrimeric interaction may occur between PIEZO1 and PIEZO2. Interacts with STOM13. Interacts with TMC7; the interaction inhibits PIEZO2-conducted mechanically activated currents. Interacts with TMC1; the interaction may be part of the MET complex. Interacts with MDFIC (via C-terminus); the interaction prolongs Piezo channel inactivation. Interacts with MDFI (via C-terminus); the interaction prolongs Piezo channel inactivation. As to expression, expressed in bladder, colon, and lung, but less abundant in kidney or skin. Strong expression is observed in dorsal root ganglia (DRG) sensory neurons. Expressed in a wide range of cutaneous low-threshold mechanoreceptors (LTMRs), including Merkel cells and Meissner's corpuscles. Expressed in sensory neurons. Expressed in cochlear inner and outer hair cells and vestibular organ hair cells. Expressed in pulmonary neuroepithelial cell bodies. Expressed in bladder urothelium and sensory neurons of the lower urinary tract. Expressed in sensory endings of proprioceptors innervating muscle spindles and Golgi tendon organs.

Its subcellular location is the cell membrane. It catalyses the reaction Ca(2+)(in) = Ca(2+)(out). Regulated by auxillary subunits MDFIC and MDFI. Channel activity is inhibited by TMEM120aa. Phosphatidic acid and lysophosphatidic acid inhibit Piezo2 channel activity. Pore-forming subunit of the mechanosensitive non-specific cation Piezo channel required for rapidly adapting mechanically activated (MA) currents and has a key role in sensing touch and tactile pain. Piezo channels are homotrimeric three-blade propeller-shaped structures that utilize a cap-motion and plug-and-latch mechanism to gate their ion-conducting pathways. Expressed in sensory neurons, is essential for diverse physiological processes, including respiratory control, systemic metabolism, urinary function, and proprioception. Mediates airway stretch sensing, enabling efficient respiration at birth and maintaining normal breathing in adults. It regulates brown and beige adipose tissue morphology and function, preventing systemic hypermetabolism. In the lower urinary tract, acts as a sensor in both the bladder urothelium and innervating sensory neurons and is required for bladder-stretch sensing and urethral micturition reflexes, ensuring proper urinary function. Additionally, Piezo2 serves as the principal mechanotransducer in proprioceptors, facilitating proprioception and coordinated body movements. In inner ear hair cells, PIEZO1/2 subunits may constitute part of the mechanotransducer (MET) non-selective cation channel complex where they may act as pore-forming ion-conducting component in the complex. Required for Merkel-cell mechanotransduction. Plays a major role in light-touch mechanosensation. This is Piezo-type mechanosensitive ion channel component 2 from Mus musculus (Mouse).